Reading from the N-terminus, the 146-residue chain is Large ribosomal subunit protein uL13 (146 aa).

It belongs to the universal ribosomal protein uL13 family. As to quaternary structure, part of the 50S ribosomal subunit.

In terms of biological role, this protein is one of the early assembly proteins of the 50S ribosomal subunit, although it is not seen to bind rRNA by itself. It is important during the early stages of 50S assembly. The sequence is that of Large ribosomal subunit protein uL13 from Mycoplasma genitalium (strain ATCC 33530 / DSM 19775 / NCTC 10195 / G37) (Mycoplasmoides genitalium).